The primary structure comprises 376 residues: Glutamate 5-kinase (376 aa).

Residue Lys15 coordinates ATP. Residues Ser56, Asp143, and Asn155 each contribute to the substrate site. Residue 175–176 coordinates ATP; sequence SD. A PUA domain is found at 281–358; sequence KGTLTIDAGA…PDVMMILGIT (78 aa).

Belongs to the glutamate 5-kinase family.

It localises to the cytoplasm. The enzyme catalyses L-glutamate + ATP = L-glutamyl 5-phosphate + ADP. Its pathway is amino-acid biosynthesis; L-proline biosynthesis; L-glutamate 5-semialdehyde from L-glutamate: step 1/2. In terms of biological role, catalyzes the transfer of a phosphate group to glutamate to form L-glutamate 5-phosphate. The sequence is that of Glutamate 5-kinase from Rhodopseudomonas palustris (strain ATCC BAA-98 / CGA009).